Reading from the N-terminus, the 209-residue chain is Somatotropin (209 aa).

The first 22 residues, 1–22 (MGQVFLLMPVLLVAGYLSLGAA), serve as a signal peptide directing secretion. His-38 contributes to the Zn(2+) binding site. A disulfide bridge links Cys-71 with Cys-182. Position 191 (Glu-191) interacts with Zn(2+). Cys-199 and Cys-207 are oxidised to a cystine.

This sequence belongs to the somatotropin/prolactin family.

The protein resides in the secreted. Its function is as follows. Growth hormone plays an important role in growth control and is involved in the regulation of several anabolic processes. Implicated as an osmoregulatory substance important for seawater adaptation. This chain is Somatotropin (gh), found in Esox lucius (Northern pike).